The sequence spans 63 residues: Arabinogalactan protein 41 (63 aa).

An N-terminal signal peptide occupies residues 1-27; the sequence is MSGSRLFFGVSTIVSIIFAILLPMAHA. Gln28 bears the Pyrrolidone carboxylic acid mark. 4-hydroxyproline occurs at positions 32, 34, and 36. O-linked (Ara...) hydroxyproline glycans are attached at residues Pro32, Pro34, and Pro36. Residue Ser38 is the site of GPI-anchor amidated serine attachment. Positions 39 to 63 are cleaved as a propeptide — removed in mature form; it reads DGTTIDQGIAYVLMLVALVLTYLIH.

This sequence belongs to the AG-peptide AGP family. Contains 4-hydroxyproline; hydroxylated on Pro-32, Pro-34 and Pro-36. Post-translationally, O-glycosylated on hydroxyprolines; noncontiguous hydroxylproline residues are glycosylated with arabinogalactan.

Its subcellular location is the cell membrane. Its function is as follows. Proteoglycan that seems to be implicated in diverse developmental roles such as differentiation, cell-cell recognition, embryogenesis and programmed cell death. The protein is Arabinogalactan protein 41 of Arabidopsis thaliana (Mouse-ear cress).